Here is a 78-residue protein sequence, read N- to C-terminus: Neurogranin (78 aa).

Met1 carries the post-translational modification N-acetylmethionine. Cys3 and Cys51 form a disulfide bridge. In terms of domain architecture, IQ spans 26-47; that stretch reads ANAAAAKIQASFRGHMARKKIK. Ser36 is modified (phosphoserine; by PHK and PKC). The tract at residues 39 to 78 is disordered; sequence GHMARKKIKSGECGRKGPGPGGPGGAGGARGGAGGGPSGD. A Collagen-like domain is found at 48–78; it reads SGECGRKGPGPGGPGGAGGARGGAGGGPSGD. Gly residues predominate over residues 54 to 78; it reads KGPGPGGPGGAGGARGGAGGGPSGD. At Arg68 the chain carries Citrulline; partial. Arg68 carries the post-translational modification Omega-N-methylarginine.

Belongs to the neurogranin family. As to quaternary structure, interacts with apo-calmodulin; this interaction decreases the affinity of calmodulin for calcium ions. In terms of processing, disulfide bond formation is redox-sensitive. The cysteine residues are readily oxidized by several nitric acid (NO) donors and other oxidants to form intramolecular disulfide. Cys-51 can form a disulfide with any other of the cysteine residues with an order of reactivity Cys-9 &gt; Cys-4 &gt; Cys-3. Post-translationally, phosphorylated at Ser-36 by PHK and PKC, phosphorylation prevents interaction with Calmodulin and interrupts several learning- and memory-associated functions.

The protein resides in the cytoplasm. It localises to the synapse. The protein localises to the cell projection. Its subcellular location is the dendritic spine. Its function is as follows. Regulates the affinity of calmodulin for calcium. Involved in synaptic plasticity and spatial learning. The sequence is that of Neurogranin (Nrgn) from Mus musculus (Mouse).